The following is a 61-amino-acid chain: Large ribosomal subunit protein uL30 (61 aa).

It belongs to the universal ribosomal protein uL30 family. Part of the 50S ribosomal subunit.

The polypeptide is Large ribosomal subunit protein uL30 (Bifidobacterium longum (strain DJO10A)).